A 61-amino-acid chain; its full sequence is Small ribosomal subunit protein uS14B (61 aa).

Positions 24, 27, 40, and 43 each coordinate Zn(2+).

This sequence belongs to the universal ribosomal protein uS14 family. Zinc-binding uS14 subfamily. As to quaternary structure, part of the 30S ribosomal subunit. Contacts proteins S3 and S10. Zn(2+) serves as cofactor.

In terms of biological role, binds 16S rRNA, required for the assembly of 30S particles and may also be responsible for determining the conformation of the 16S rRNA at the A site. The sequence is that of Small ribosomal subunit protein uS14B from Mycobacteroides abscessus (strain ATCC 19977 / DSM 44196 / CCUG 20993 / CIP 104536 / JCM 13569 / NCTC 13031 / TMC 1543 / L948) (Mycobacterium abscessus).